Consider the following 342-residue polypeptide: DNA-directed RNA polymerase subunit alpha (342 aa).

The tract at residues 1 to 238 is alpha N-terminal domain (alpha-NTD); the sequence is MESLNVNAKN…DQLNMFVNFD (238 aa). The tract at residues 254–342 is alpha C-terminal domain (alpha-CTD); the sequence is FNKNLLRKVD…EMSKKLEEQI (89 aa).

It belongs to the RNA polymerase alpha chain family. Homodimer. The RNAP catalytic core consists of 2 alpha, 1 beta, 1 beta' and 1 omega subunit. When a sigma factor is associated with the core the holoenzyme is formed, which can initiate transcription.

It catalyses the reaction RNA(n) + a ribonucleoside 5'-triphosphate = RNA(n+1) + diphosphate. Functionally, DNA-dependent RNA polymerase catalyzes the transcription of DNA into RNA using the four ribonucleoside triphosphates as substrates. The sequence is that of DNA-directed RNA polymerase subunit alpha from Pelagibacter ubique (strain HTCC1062).